A 1905-amino-acid polypeptide reads, in one-letter code: Microtubule cross-linking factor 1 (1905 aa).

Residues 1–249 (METLNGPAGG…SSDREPPRGA (249 aa)) form a necessary for colocalization and binding with microtubules region. Residues 1–329 (METLNGPAGG…SLGEQSRLVP (329 aa)) form a disordered region. A necessary for self-assembly, microtubule bundling activity and apicobasal microtubule organization region spans residues 1-508 (METLNGPAGG…QDDSADLRCQ (508 aa)). Residues 22-40 (QHHRHHHLHPVAERRRLHR) show a composition bias toward basic residues. 2 stretches are compositionally biased toward low complexity: residues 63-95 (VPSSGRAPAPAAPRSPNLAGKAPPSPGSLAAPG) and 115-130 (AGARAAGGAKAALGSR). A phosphoserine mark is found at serine 77 and serine 87. Phosphoserine occurs at positions 217, 221, and 263. Residues 268-283 (ALLAAPLAAGACPGGR) show a composition bias toward low complexity. Coiled coils occupy residues 330–404 (AAEE…EQKS), 432–483 (SVRL…SSLK), and 513–718 (KEEA…LQHE). Disordered stretches follow at residues 544–563 (YGDVDSPLPTGEAGGPPSTR), 601–631 (DMRGQQEREGPGRDHAPSIPTSPFGDSLESS), 671–694 (FEPPREPGWLGEGASPGAGGGAPL), 737–800 (LRAP…SEPC), and 842–867 (AGLRGGAPLPGPGLQGEEEQGEGDQQ). At serine 549 the chain carries Phosphoserine. Over residues 601–616 (DMRGQQEREGPGRDHA) the composition is skewed to basic and acidic residues. Serine 618 carries the post-translational modification Phosphoserine. Phosphothreonine is present on threonine 621. The span at 680–692 (LGEGASPGAGGGA) shows a compositional bias: gly residues. Residue serine 685 is modified to Phosphoserine. Residues 741-770 (SPRDSDAESDAGKKESDGEESRLPQPKREG) show a composition bias toward basic and acidic residues. At serine 776 the chain carries Phosphoserine. The segment covering 857–866 (GEEEQGEGDQ) has biased composition (acidic residues). Phosphoserine occurs at positions 901, 923, 941, and 975. Residues 1080–1100 (GVQGGHQADGPDHDSDRGCGF) are disordered. Coiled-coil stretches lie at residues 1143-1201 (KALL…ELGS) and 1238-1278 (EKNW…KENS). Positions 1265-1382 (EFLWRIEQLQ…EENHKGNLQR (118 aa)) are necessary for interaction with MARK2 and apicobasal microtubule bundle formation in polarized epithelial cells. Phosphoserine is present on serine 1278. Residues 1346–1384 (ALSLDDEPEEPPAHRPEREFRNRLPEEEENHKGNLQRAV) are disordered. Basic and acidic residues predominate over residues 1356–1377 (PPAHRPEREFRNRLPEEEENHK). Phosphoserine occurs at positions 1385, 1388, and 1399. Position 1417 is a phosphothreonine (threonine 1417). The residue at position 1421 (serine 1421) is a Phosphoserine. Tyrosine 1427 is modified (phosphotyrosine). The tract at residues 1485 to 1505 (DTMTSPEHCQKQPLRSHVLTE) is disordered. 7 positions are modified to phosphoserine: serine 1514, serine 1523, serine 1561, serine 1578, serine 1583, serine 1592, and serine 1661. The disordered stretch occupies residues 1524–1569 (ITAAGGEGPFPTSRARGSPGDTKGGPPEPMLSRWPCTSPRHSRDYV). Disordered stretches follow at residues 1655-1689 (GSGVTSSPHKCLTPKAGGGATPVSSPSRSLRSRQV), 1707-1756 (PKYG…PVHT), 1782-1842 (GLRA…APPG), and 1863-1905 (KEER…PWGL). A phosphothreonine mark is found at threonine 1667 and threonine 1675. A compositionally biased stretch (low complexity) spans 1678 to 1687 (SSPSRSLRSR). The necessary for colocalization and binding with microtubules stretch occupies residues 1678–1773 (SSPSRSLRSR…SLFNIIDHSP (96 aa)). 2 positions are modified to phosphoserine: serine 1679 and serine 1683. The segment covering 1744 to 1756 (ARSTTTRESPVHT) has biased composition (polar residues). Serine 1791, serine 1808, serine 1812, and serine 1814 each carry phosphoserine.

Belongs to the SOGA family. As to quaternary structure, homodimer. Associates (via N- and C-terminus domains) with microtubule filaments. In terms of assembly, interacts with MARK2; the interaction is direct. Post-translationally, phosphorylated during mitosis in a CDK1-dependent manner.

The protein localises to the lateral cell membrane. Its subcellular location is the apical cell membrane. The protein resides in the cytoplasm. It is found in the cytoskeleton. It localises to the spindle pole. The protein localises to the midbody. Its function is as follows. Microtubule-associated factor involved in the late phase of epithelial polarization and microtubule dynamics regulation. Plays a role in the development and maintenance of non-centrosomal microtubule bundles at the lateral membrane in polarized epithelial cells. Required for faithful chromosome segregation during mitosis. The protein is Microtubule cross-linking factor 1 (MTCL1) of Homo sapiens (Human).